A 129-amino-acid chain; its full sequence is Integration host factor subunit alpha (129 aa).

Residues 87-129 are disordered; sequence SALNGEAPPEDHAEIDAREEAAADAAEARGEDFDEEGMEDMEG. Over residues 95 to 117 the composition is skewed to basic and acidic residues; it reads PEDHAEIDAREEAAADAAEARGE. Over residues 118–129 the composition is skewed to acidic residues; it reads DFDEEGMEDMEG.

The protein belongs to the bacterial histone-like protein family. Heterodimer of an alpha and a beta chain.

Functionally, this protein is one of the two subunits of integration host factor, a specific DNA-binding protein that functions in genetic recombination as well as in transcriptional and translational control. It is necessary for normal cell growth and the production of carotenoids in response to light. This Myxococcus xanthus protein is Integration host factor subunit alpha (ihfA).